The chain runs to 238 residues: Flagellar L-ring protein (238 aa).

An N-terminal signal peptide occupies residues 1 to 23; that stretch reads MVKLFSYKIKYYLTAFFIIIIQS. Cysteine 24 is lipidated: N-palmitoyl cysteine. The S-diacylglycerol cysteine moiety is linked to residue cysteine 24.

This sequence belongs to the FlgH family. The basal body constitutes a major portion of the flagellar organelle and consists of four rings (L,P,S, and M) mounted on a central rod.

Its subcellular location is the cell outer membrane. The protein localises to the bacterial flagellum basal body. In terms of biological role, assembles around the rod to form the L-ring and probably protects the motor/basal body from shearing forces during rotation. The protein is Flagellar L-ring protein of Buchnera aphidicola subsp. Schizaphis graminum (strain Sg).